Here is a 1209-residue protein sequence, read N- to C-terminus: Calcium-activated potassium channel subunit alpha-1 (1209 aa).

Gly residues predominate over residues Met1–Glu26. 2 disordered regions span residues Met1 to Leu29 and Leu42 to Glu64. At Met1–Met87 the chain is on the extracellular side. Positions Ser45–Ser61 are enriched in low complexity. The chain crosses the membrane as a helical span at residues Trp88–Leu108. The Cytoplasmic segment spans residues Trp109 to Arg179. 3 S-palmitoyl cysteine lipidation sites follow: Cys119, Cys120, and Cys122. The chain crosses the membrane as a helical span at residues Val180–Ser200. Over Ser201 to Thr215 the chain is Extracellular. Residues Leu216 to Ala236 traverse the membrane as a helical segment. Residues Ala237–Lys240 lie on the Cytoplasmic side of the membrane. The chain crosses the membrane as a helical span at residues Leu241–Val261. Topologically, residues Ser262–Leu265 are extracellular. Residues Asn266–Ile286 form a helical; Voltage-sensor membrane-spanning segment. Residues Leu287–Leu301 are Cytoplasmic-facing. Residues Val302 to Val322 traverse the membrane as a helical segment. Residues Glu323–Gln336 lie on the Extracellular side of the membrane. The segment at residues Ala337–Val359 is an intramembrane region (pore-forming). The Selectivity for potassium signature appears at Thr353–Tyr356. Topologically, residues Tyr360 to Leu368 are extracellular. Residues Phe369–Ile389 form a helical membrane-spanning segment. The Cytoplasmic segment spans residues Glu390–Arg1209. One can recognise an RCK N-terminal 1 domain in the interval Arg408 to Ile550. The Mg(2+) site is built by Glu440, Gln463, and Glu465. The tract at residues Leu557 to Phe577 is segment S7. Positions Leu614–Ile634 are segment S8. The interval Cys682–His686 is heme-binding motif. The segment at Glu704–Arg734 is disordered. At Thr710 the chain carries Phosphothreonine. Residues Ser712, Ser725, and Ser729 each carry the phosphoserine modification. A segment S9 region spans residues Val784–Leu804. The 145-residue stretch at Ser786 to Pro930 folds into the RCK N-terminal 2 domain. Thr917 is subject to Phosphothreonine. A phosphoserine mark is found at Ser925 and Ser929. The Calcium bowl signature appears at Thr977 to Glu999. 4 residues coordinate Ca(2+): Gln986, Asp989, Asp992, and Asp994. The tract at residues Phe1006–Phe1026 is segment S10. The segment covering Arg1160 to Ser1185 has biased composition (low complexity). A disordered region spans residues Arg1160–Arg1209. Residues Lys1194–Arg1209 show a composition bias toward basic and acidic residues. 2 positions are modified to phosphoserine: Ser1195 and Ser1198.

It belongs to the potassium channel family. Calcium-activated (TC 1.A.1.3) subfamily. KCa1.1/KCNMA1 sub-subfamily. Homotetramer; which constitutes the calcium-activated potassium channel. Interacts with beta subunits KCNMB1, KCNMB2, KCNMB3 and KCNMB4. Interacts with gamma subunits LRRC26, LRRC38, LRRC52 and LRRC55. Beta and gamma subunits are accessory, and modulate its activity. Interacts with RAB11B. Phosphorylated. Phosphorylation by kinases such as PKA and/or PKG. In smooth muscles, phosphorylation affects its activity. In terms of processing, palmitoylation by ZDHHC22 and ZDHHC23 within the intracellular linker between the S0 and S1 transmembrane domains regulates localization to the plasma membrane. Depalmitoylated by LYPLA1 and LYPLAL1, leading to retard exit from the trans-Golgi network.

The protein localises to the cell membrane. It is found in the endoplasmic reticulum membrane. The catalysed reaction is K(+)(in) = K(+)(out). Its activity is regulated as follows. Ethanol and carbon monoxide-bound heme increase channel activation. Heme inhibits channel activation. Potassium channel activated by both membrane depolarization or increase in cytosolic Ca(2+) that mediates export of K(+). It is also activated by the concentration of cytosolic Mg(2+). Its activation dampens the excitatory events that elevate the cytosolic Ca(2+) concentration and/or depolarize the cell membrane. It therefore contributes to repolarization of the membrane potential. Plays a key role in controlling excitability in a number of systems, such as regulation of the contraction of smooth muscle, the tuning of hair cells in the cochlea, regulation of transmitter release, and innate immunity. In smooth muscles, its activation by high level of Ca(2+), caused by ryanodine receptors in the sarcoplasmic reticulum, regulates the membrane potential. In cochlea cells, its number and kinetic properties partly determine the characteristic frequency of each hair cell and thereby helps to establish a tonotopic map. Kinetics of KCNMA1 channels are determined by alternative splicing, phosphorylation status and its combination with modulating beta subunits. Highly sensitive to both iberiotoxin (IbTx) and charybdotoxin (CTX). Functionally, potassium channel activated by both membrane depolarization or increase in cytosolic Ca(2+) that mediates export of K(+). This is Calcium-activated potassium channel subunit alpha-1 (Kcnma1) from Rattus norvegicus (Rat).